Consider the following 158-residue polypeptide: NAD(P)H-quinone oxidoreductase subunit J, chloroplastic (158 aa).

The protein belongs to the complex I 30 kDa subunit family. As to quaternary structure, NDH is composed of at least 16 different subunits, 5 of which are encoded in the nucleus.

It is found in the plastid. It localises to the chloroplast thylakoid membrane. It carries out the reaction a plastoquinone + NADH + (n+1) H(+)(in) = a plastoquinol + NAD(+) + n H(+)(out). The enzyme catalyses a plastoquinone + NADPH + (n+1) H(+)(in) = a plastoquinol + NADP(+) + n H(+)(out). Its function is as follows. NDH shuttles electrons from NAD(P)H:plastoquinone, via FMN and iron-sulfur (Fe-S) centers, to quinones in the photosynthetic chain and possibly in a chloroplast respiratory chain. The immediate electron acceptor for the enzyme in this species is believed to be plastoquinone. Couples the redox reaction to proton translocation, and thus conserves the redox energy in a proton gradient. The chain is NAD(P)H-quinone oxidoreductase subunit J, chloroplastic from Gossypium barbadense (Sea Island cotton).